The sequence spans 443 residues: Ribulose bisphosphate carboxylase large chain (443 aa).

The substrate site is built by N89 and T139. The active-site Proton acceptor is the K141. K143 contacts substrate. Mg(2+) contacts are provided by K167, D169, and E170. Residue K167 is modified to N6-carboxylysine. H260 acts as the Proton acceptor in catalysis. The substrate site is built by R261, H293, and S345.

The protein belongs to the RuBisCO large chain family. Type I subfamily. In terms of assembly, heterohexadecamer of 8 large chains and 8 small chains; disulfide-linked. The disulfide link is formed within the large subunit homodimers. Mg(2+) serves as cofactor. In terms of processing, the disulfide bond which can form in the large chain dimeric partners within the hexadecamer appears to be associated with oxidative stress and protein turnover.

Its subcellular location is the plastid. It localises to the chloroplast. The enzyme catalyses 2 (2R)-3-phosphoglycerate + 2 H(+) = D-ribulose 1,5-bisphosphate + CO2 + H2O. It carries out the reaction D-ribulose 1,5-bisphosphate + O2 = 2-phosphoglycolate + (2R)-3-phosphoglycerate + 2 H(+). In terms of biological role, ruBisCO catalyzes two reactions: the carboxylation of D-ribulose 1,5-bisphosphate, the primary event in carbon dioxide fixation, as well as the oxidative fragmentation of the pentose substrate in the photorespiration process. Both reactions occur simultaneously and in competition at the same active site. The sequence is that of Ribulose bisphosphate carboxylase large chain from Verbena bonariensis (Argentinian vervain).